Here is a 333-residue protein sequence, read N- to C-terminus: Tetraacyldisaccharide 4'-kinase (333 aa).

60–67 (TVGGTGKT) provides a ligand contact to ATP.

The protein belongs to the LpxK family.

It catalyses the reaction a lipid A disaccharide + ATP = a lipid IVA + ADP + H(+). It participates in glycolipid biosynthesis; lipid IV(A) biosynthesis; lipid IV(A) from (3R)-3-hydroxytetradecanoyl-[acyl-carrier-protein] and UDP-N-acetyl-alpha-D-glucosamine: step 6/6. In terms of biological role, transfers the gamma-phosphate of ATP to the 4'-position of a tetraacyldisaccharide 1-phosphate intermediate (termed DS-1-P) to form tetraacyldisaccharide 1,4'-bis-phosphate (lipid IVA). This is Tetraacyldisaccharide 4'-kinase from Azotobacter vinelandii (strain DJ / ATCC BAA-1303).